The sequence spans 491 residues: Glucose-6-phosphate 1-dehydrogenase (491 aa).

Residues arginine 51 and lysine 150 each contribute to the NADP(+) site. Histidine 180, lysine 184, glutamate 218, and aspartate 237 together coordinate substrate. Histidine 242 serves as the catalytic Proton acceptor. Lysine 341 is a binding site for substrate.

Belongs to the glucose-6-phosphate dehydrogenase family.

The catalysed reaction is D-glucose 6-phosphate + NADP(+) = 6-phospho-D-glucono-1,5-lactone + NADPH + H(+). The protein operates within carbohydrate degradation; pentose phosphate pathway; D-ribulose 5-phosphate from D-glucose 6-phosphate (oxidative stage): step 1/3. Functionally, catalyzes the oxidation of glucose 6-phosphate to 6-phosphogluconolactone. The protein is Glucose-6-phosphate 1-dehydrogenase of Rhizobium meliloti (strain 1021) (Ensifer meliloti).